We begin with the raw amino-acid sequence, 934 residues long: Bifunctional uridylyltransferase/uridylyl-removing enzyme (934 aa).

The tract at residues 1-379 (MSAHDLKLEE…TFSRRKRKLS (379 aa)) is uridylyltransferase. Positions 380 to 736 (DDGAFISENH…AKPHAFEAVT (357 aa)) are uridylyl-removing. The HD domain maps to 496-613 (VDEHLLRCIA…IDFADTVQTM (118 aa)). ACT domains are found at residues 737–818 (EITV…DMLA) and 848–931 (VIEV…RSPQ).

It belongs to the GlnD family. Mg(2+) is required as a cofactor.

The catalysed reaction is [protein-PII]-L-tyrosine + UTP = [protein-PII]-uridylyl-L-tyrosine + diphosphate. The enzyme catalyses [protein-PII]-uridylyl-L-tyrosine + H2O = [protein-PII]-L-tyrosine + UMP + H(+). With respect to regulation, uridylyltransferase (UTase) activity is inhibited by glutamine, while glutamine activates uridylyl-removing (UR) activity. In terms of biological role, modifies, by uridylylation and deuridylylation, the PII regulatory proteins (GlnB and homologs), in response to the nitrogen status of the cell that GlnD senses through the glutamine level. Under low glutamine levels, catalyzes the conversion of the PII proteins and UTP to PII-UMP and PPi, while under higher glutamine levels, GlnD hydrolyzes PII-UMP to PII and UMP (deuridylylation). Thus, controls uridylylation state and activity of the PII proteins, and plays an important role in the regulation of nitrogen assimilation and metabolism. In Brucella abortus (strain S19), this protein is Bifunctional uridylyltransferase/uridylyl-removing enzyme.